A 523-amino-acid chain; its full sequence is Aldehyde oxidase GLOX (523 aa).

Positions 1-19 are cleaved as a signal peptide; sequence MILDAAIVALADLPGTWEL.

It localises to the secreted. The protein localises to the cell wall. The catalysed reaction is an aldehyde + O2 + H2O = a carboxylate + H2O2 + H(+). Catalyzes the oxidation of aldehydes to the corresponding carboxylate by coupling the reaction to the reduction of dioxygen to hydrogen peroxide. Substrates include glyoxal and other aldehydes. Involved in disease resistance against the grapevine powdery mildew E.necator. Is sufficient to confer disease resistance to E.necator. Can produce hydrogen peroxide in response to E.necator infection, and this may directly play a role in the defense mechanism during plant-pathogen interactions. This chain is Aldehyde oxidase GLOX, found in Vitis pseudoreticulata (Chinese wild grapevine).